Here is a 491-residue protein sequence, read N- to C-terminus: UDP-N-acetylmuramoyl-L-alanyl-D-glutamate--2,6-diaminopimelate ligase (491 aa).

Ser30 provides a ligand contact to UDP-N-acetyl-alpha-D-muramoyl-L-alanyl-D-glutamate. Residue Gly108–Thr114 coordinates ATP. Residues Asn149, Thr150–Thr151, Ser177, Gln183, and Arg185 each bind UDP-N-acetyl-alpha-D-muramoyl-L-alanyl-D-glutamate. Residue Lys217 is modified to N6-carboxylysine. Meso-2,6-diaminopimelate is bound by residues Arg383, Asp407–Arg410, Gly458, and Glu462. The Meso-diaminopimelate recognition motif motif lies at Asp407–Arg410.

Belongs to the MurCDEF family. MurE subfamily. Requires Mg(2+) as cofactor. Post-translationally, carboxylation is probably crucial for Mg(2+) binding and, consequently, for the gamma-phosphate positioning of ATP.

It localises to the cytoplasm. It catalyses the reaction UDP-N-acetyl-alpha-D-muramoyl-L-alanyl-D-glutamate + meso-2,6-diaminopimelate + ATP = UDP-N-acetyl-alpha-D-muramoyl-L-alanyl-gamma-D-glutamyl-meso-2,6-diaminopimelate + ADP + phosphate + H(+). It functions in the pathway cell wall biogenesis; peptidoglycan biosynthesis. Catalyzes the addition of meso-diaminopimelic acid to the nucleotide precursor UDP-N-acetylmuramoyl-L-alanyl-D-glutamate (UMAG) in the biosynthesis of bacterial cell-wall peptidoglycan. The polypeptide is UDP-N-acetylmuramoyl-L-alanyl-D-glutamate--2,6-diaminopimelate ligase (Listeria monocytogenes serotype 4b (strain F2365)).